We begin with the raw amino-acid sequence, 321 residues long: Glucokinase (321 aa).

Residue 8 to 13 (GDVGGT) participates in ATP binding.

This sequence belongs to the bacterial glucokinase family.

Its subcellular location is the cytoplasm. The enzyme catalyses D-glucose + ATP = D-glucose 6-phosphate + ADP + H(+). The polypeptide is Glucokinase (Klebsiella pneumoniae subsp. pneumoniae (strain ATCC 700721 / MGH 78578)).